Here is a 273-residue protein sequence, read N- to C-terminus: Peroxiredoxin-4 (273 aa).

An N-terminal signal peptide occupies residues 1–40 (METWSKLLDGTTPSRRWRKLVLLLPPLLLFLLQTEALQGL). The region spanning 81-239 (AKISKPAPYW…TLRLVQAFQY (159 aa)) is the Thioredoxin domain. Residue Cys-126 is the Cysteine sulfenic acid (-SOH) intermediate of the active site.

It belongs to the peroxiredoxin family. AhpC/Prx1 subfamily. In terms of assembly, homodimer; disulfide-linked, upon oxidation. 5 homodimers assemble to form a ring-like decamer. Post-translationally, the enzyme can be inactivated by further oxidation of the cysteine sulfenic acid (C(P)-SOH) to sulphinic acid (C(P)-SO2H) and sulphonic acid (C(P)-SO3H) instead of its condensation to a disulfide bond.

It is found in the cytoplasm. Its subcellular location is the endoplasmic reticulum. The protein localises to the secreted. It catalyses the reaction a hydroperoxide + [thioredoxin]-dithiol = an alcohol + [thioredoxin]-disulfide + H2O. Its function is as follows. Thiol-specific peroxidase that catalyzes the reduction of hydrogen peroxide and organic hydroperoxides to water and alcohols, respectively. Plays a role in cell protection against oxidative stress by detoxifying peroxides and as sensor of hydrogen peroxide-mediated signaling events. Regulates the activation of NF-kappa-B in the cytosol by a modulation of I-kappa-B-alpha phosphorylation. The protein is Peroxiredoxin-4 (Prdx4) of Rattus norvegicus (Rat).